Reading from the N-terminus, the 428-residue chain is NADP-specific glutamate dehydrogenase (428 aa).

Substrate contacts are provided by Lys68 and Lys92. Residue Lys104 is the Proton donor of the active site. Positions 188 and 219 each coordinate NADP(+). Ser356 provides a ligand contact to substrate.

This sequence belongs to the Glu/Leu/Phe/Val dehydrogenases family. In terms of assembly, homohexamer.

It carries out the reaction L-glutamate + NADP(+) + H2O = 2-oxoglutarate + NH4(+) + NADPH + H(+). Functionally, catalyzes the reversible oxidative deamination of glutamate to alpha-ketoglutarate and ammonia. The sequence is that of NADP-specific glutamate dehydrogenase (gdhA) from Synechocystis sp. (strain ATCC 27184 / PCC 6803 / Kazusa).